The primary structure comprises 171 residues: 3-hydroxydecanoyl-[acyl-carrier-protein] dehydratase (171 aa).

The active site involves His69.

The protein belongs to the thioester dehydratase family. FabA subfamily. As to quaternary structure, homodimer.

It localises to the cytoplasm. It carries out the reaction a (3R)-hydroxyacyl-[ACP] = a (2E)-enoyl-[ACP] + H2O. It catalyses the reaction (3R)-hydroxydecanoyl-[ACP] = (2E)-decenoyl-[ACP] + H2O. The enzyme catalyses (2E)-decenoyl-[ACP] = (3Z)-decenoyl-[ACP]. Its pathway is lipid metabolism; fatty acid biosynthesis. Its function is as follows. Necessary for the introduction of cis unsaturation into fatty acids. Catalyzes the dehydration of (3R)-3-hydroxydecanoyl-ACP to E-(2)-decenoyl-ACP and then its isomerization to Z-(3)-decenoyl-ACP. Can catalyze the dehydratase reaction for beta-hydroxyacyl-ACPs with saturated chain lengths up to 16:0, being most active on intermediate chain length. This is 3-hydroxydecanoyl-[acyl-carrier-protein] dehydratase from Caulobacter sp. (strain K31).